The following is a 46-amino-acid chain: GIFSKFGGKAIKNLFIKGAKNIGKEVGMDVIRTGIDVAGCKIKGEC.

C40 and C46 form a disulfide bridge.

As to expression, expressed by the skin glands.

The protein localises to the secreted. Functionally, has antibacterial activity against the Gram-positive bacterium S.aureus ATCC 25923 (MIC=12 uM) and the Gram-negative bacterium E.coli ATCC 25726 (MIC=12 uM). The sequence is that of Esculentin-1HSa from Odorrana hosii (Hose's rock frog).